Here is a 119-residue protein sequence, read N- to C-terminus: UPF0738 protein BAA_1286 (119 aa).

Belongs to the UPF0738 family.

The protein is UPF0738 protein BAA_1286 of Bacillus anthracis (strain A0248).